Reading from the N-terminus, the 504-residue chain is TGF-beta-activated kinase 1 and MAP3K7-binding protein 1 (504 aa).

Residues 1–22 (MAAQRRSLLQSEQQPSWTDDLP) are disordered. Serine 7 is modified (phosphoserine). A compositionally biased stretch (polar residues) spans 7–17 (SLLQSEQQPSW). Positions 28–365 (GVGSASNRSY…EDMTLLVRNF (338 aa)) constitute a PPM-type phosphatase domain. Serine 378 is modified (phosphoserine). O-linked (GlcNAc) serine glycosylation occurs at serine 395. Serine 423 carries the phosphoserine; by MAPK14 modification. Positions 430-439 (ATPTLTNQSP) are enriched in polar residues. A disordered region spans residues 430–478 (ATPTLTNQSPTLTLQSTNTHTQSSSSSSDGGLFRSRPAHSLPPGEDGRV). Threonine 431 is subject to Phosphothreonine; by MAPK14. Serine 438 is modified (phosphoserine; by MAPK14). Residues 440-457 (TLTLQSTNTHTQSSSSSS) show a composition bias toward low complexity. The residue at position 442 (threonine 442) is a Phosphothreonine.

Interacts with XIAP and BIRC7. Interacts with TRAF6 and MAP3K7; during IL-1 signaling. Identified in the TRIKA2 complex composed of MAP3K7, TAB1 and TAB2. Interacts with TRAF6 and MAPK14; these interactions allow MAPK14 autophosphorylation. Interacts with STING1; interaction takes place following cGAMP activation and promotes TAB1 recruitment to the endoplasmic reticulum, triggering MAP3K7/TAK1 activation and STING1 phosphorylation. Post-translationally, phosphorylated at all three sites Ser-423, Thr-431 and Ser-438 by MAPK14 when cells were exposed to cellular stresses, or stimulated with TNF-alpha, IL1 or LPS. These phosphorylations inhibit TAK1 activation by a feedback control mechanism. Dephosphorylated by DUSP14 at Ser-438, leading to TAB1-MAP3K7/TAK1 complex inactivation in T-cells. Ubiquitinated by MAP3K1 with 'Lys-63'-linked polyubiquitin; leading to activation of TAK1 and of JNK and p38 MAP kinases following EGF and TGF-beta stimulation. Ubiquitinated by ITCH with 'Lys-48'-linked polyubiquitin; leading to proteasomal degradation. Ubiquitinated by RNF114 during maternal-to-zygotic transition; leading to degradation. In terms of processing, (Microbial infection) Deubiquitinated by Y.enterocolitica YopP. Post-translationally, O-GlcNAcylated at Ser-395 by OGT is required for full MAP3K7/TAK1 activation upon stimulation with IL-1 or osmotic stress. Deglycosylated at Ser-395 by OGA. Ubiquitous.

Its subcellular location is the cytoplasm. The protein resides in the cytosol. The protein localises to the endoplasmic reticulum membrane. Key adapter protein that plays an essential role in JNK and NF-kappa-B activation and proinflammatory cytokines production in response to stimulation with TLRs and cytokines. Mechanistically, associates with the catalytic domain of MAP3K7/TAK1 to trigger MAP3K7/TAK1 autophosphorylation leading to its full activation. Similarly, associates with MAPK14 and triggers its autophosphorylation and subsequent activation. In turn, MAPK14 phosphorylates TAB1 and inhibits MAP3K7/TAK1 activation in a feedback control mechanism. Also plays a role in recruiting MAPK14 to the TAK1 complex for the phosphorylation of the TAB2 and TAB3 regulatory subunits. The protein is TGF-beta-activated kinase 1 and MAP3K7-binding protein 1 (TAB1) of Homo sapiens (Human).